A 143-amino-acid polypeptide reads, in one-letter code: Small ribosomal subunit protein bS6 (143 aa).

The interval 100–143 (SPIIKMKDERREVVELTTSGSEDNQKDHHKEDLDKKTDEFSEEN) is disordered. Composition is skewed to basic and acidic residues over residues 104-113 (KMKDERREVV) and 122-143 (DNQKDHHKEDLDKKTDEFSEEN).

Belongs to the bacterial ribosomal protein bS6 family.

In terms of biological role, binds together with bS18 to 16S ribosomal RNA. The chain is Small ribosomal subunit protein bS6 from Hamiltonella defensa subsp. Acyrthosiphon pisum (strain 5AT).